The sequence spans 191 residues: MQLWVGLGNPGPQYALHRHNVGFMALDTIAEVHNFGPVQKKFQGWLQEGRIGTEKVLLLKPATFMNESGRSVGEAMRFYKLGMDALVVFHDELDLAPFKVKVKQGGGTAGHNGLRSIDKHLGPDFLRVRLGIGHPGHKDRVTGHVLGNFAKSEQDDLVDMLGAIASEAALLAKGDNVLFMNNIALRQQTAG.

A tRNA-binding site is contributed by Tyr-14. His-19 functions as the Proton acceptor in the catalytic mechanism. Residues Phe-64, Asn-66, and Asn-112 each contribute to the tRNA site.

It belongs to the PTH family. Monomer.

Its subcellular location is the cytoplasm. The catalysed reaction is an N-acyl-L-alpha-aminoacyl-tRNA + H2O = an N-acyl-L-amino acid + a tRNA + H(+). In terms of biological role, hydrolyzes ribosome-free peptidyl-tRNAs (with 1 or more amino acids incorporated), which drop off the ribosome during protein synthesis, or as a result of ribosome stalling. Functionally, catalyzes the release of premature peptidyl moieties from peptidyl-tRNA molecules trapped in stalled 50S ribosomal subunits, and thus maintains levels of free tRNAs and 50S ribosomes. This is Peptidyl-tRNA hydrolase from Novosphingobium aromaticivorans (strain ATCC 700278 / DSM 12444 / CCUG 56034 / CIP 105152 / NBRC 16084 / F199).